We begin with the raw amino-acid sequence, 1486 residues long: Chromosome partition protein MukB (1486 aa).

34-41 (GGNGAGKS) provides a ligand contact to ATP. Coiled-coil stretches lie at residues 326-418 (LEAD…QYNQ), 444-480 (LETF…QAYQ), and 509-603 (RHLA…RAPV). Residues 666–783 (PGGSEDQRLN…EVPLFGRAAR (118 aa)) are flexible hinge. Coiled-coil stretches lie at residues 835–923 (EAEI…AKLE), 977–1115 (EMLS…TAKA), and 1209–1266 (VEAI…QNVS).

It belongs to the SMC family. MukB subfamily. Homodimerization via its hinge domain. Binds to DNA via its C-terminal region. Interacts, and probably forms a ternary complex, with MukE and MukF via its C-terminal region. The complex formation is stimulated by calcium or magnesium. Interacts with tubulin-related protein FtsZ.

It localises to the cytoplasm. The protein localises to the nucleoid. In terms of biological role, plays a central role in chromosome condensation, segregation and cell cycle progression. Functions as a homodimer, which is essential for chromosome partition. Involved in negative DNA supercoiling in vivo, and by this means organize and compact chromosomes. May achieve or facilitate chromosome segregation by condensation DNA from both sides of a centrally located replisome during cell division. The chain is Chromosome partition protein MukB from Escherichia coli O17:K52:H18 (strain UMN026 / ExPEC).